A 406-amino-acid chain; its full sequence is Cysteine desulfurase (406 aa).

An N6-(pyridoxal phosphate)lysine modification is found at lysine 226. Cysteine 364 acts as the Cysteine persulfide intermediate in catalysis.

It belongs to the class-V pyridoxal-phosphate-dependent aminotransferase family. Csd subfamily. In terms of assembly, homodimer. Interacts with SufE and the SufBCD complex composed of SufB, SufC and SufD. The interaction with SufE is required to mediate the direct transfer of the sulfur atom from the S-sulfanylcysteine. It depends on pyridoxal 5'-phosphate as a cofactor.

The protein localises to the cytoplasm. The catalysed reaction is (sulfur carrier)-H + L-cysteine = (sulfur carrier)-SH + L-alanine. It carries out the reaction L-selenocysteine + AH2 = hydrogenselenide + L-alanine + A + H(+). Its pathway is cofactor biosynthesis; iron-sulfur cluster biosynthesis. Functionally, cysteine desulfurases mobilize the sulfur from L-cysteine to yield L-alanine, an essential step in sulfur metabolism for biosynthesis of a variety of sulfur-containing biomolecules. Component of the suf operon, which is activated and required under specific conditions such as oxidative stress and iron limitation. Acts as a potent selenocysteine lyase in vitro, that mobilizes selenium from L-selenocysteine. Selenocysteine lyase activity is however unsure in vivo. This Yersinia pseudotuberculosis serotype IB (strain PB1/+) protein is Cysteine desulfurase.